The primary structure comprises 291 residues: Bifunctional protein FolD (291 aa).

Residues 167–169 (GRS), S192, and I233 contribute to the NADP(+) site.

This sequence belongs to the tetrahydrofolate dehydrogenase/cyclohydrolase family. Homodimer.

It catalyses the reaction (6R)-5,10-methylene-5,6,7,8-tetrahydrofolate + NADP(+) = (6R)-5,10-methenyltetrahydrofolate + NADPH. The catalysed reaction is (6R)-5,10-methenyltetrahydrofolate + H2O = (6R)-10-formyltetrahydrofolate + H(+). It participates in one-carbon metabolism; tetrahydrofolate interconversion. In terms of biological role, catalyzes the oxidation of 5,10-methylenetetrahydrofolate to 5,10-methenyltetrahydrofolate and then the hydrolysis of 5,10-methenyltetrahydrofolate to 10-formyltetrahydrofolate. In Dichelobacter nodosus (strain VCS1703A), this protein is Bifunctional protein FolD.